The sequence spans 245 residues: MVFEVIPAVDMRGGKCVQLVQGVPGSEIVSIDDPVEVALDWVRKGAKTLHLVDLDGAIEGERKNAPIIEKIVSACQKKGVQIQVGGGIRSFEDAASLLELGVSRVILGTAALKNPELVQQLSSTFGNEHVTVALDAKNGKISIKGWTEECAQTPVEMGRKFEELGAGSLLFTNIDTEGLMQGVNPVPTKNLVESVSIPVIASGGVSSLQDLRTLKKTGASGVVVGSALYTGRFTLEAAIETTQQE.

Aspartate 10 (proton acceptor) is an active-site residue. Aspartate 135 functions as the Proton donor in the catalytic mechanism.

Belongs to the HisA/HisF family.

The protein resides in the cytoplasm. It carries out the reaction 1-(5-phospho-beta-D-ribosyl)-5-[(5-phospho-beta-D-ribosylamino)methylideneamino]imidazole-4-carboxamide = 5-[(5-phospho-1-deoxy-D-ribulos-1-ylimino)methylamino]-1-(5-phospho-beta-D-ribosyl)imidazole-4-carboxamide. It functions in the pathway amino-acid biosynthesis; L-histidine biosynthesis; L-histidine from 5-phospho-alpha-D-ribose 1-diphosphate: step 4/9. This Methanosarcina barkeri (strain Fusaro / DSM 804) protein is 1-(5-phosphoribosyl)-5-[(5-phosphoribosylamino)methylideneamino] imidazole-4-carboxamide isomerase.